The following is a 233-amino-acid chain: Orotidine 5'-phosphate decarboxylase (233 aa).

Substrate-binding positions include D11, K33, 60–69 (DLKFHDIPNT), T120, R181, Q190, G210, and R211. The active-site Proton donor is the K62.

Belongs to the OMP decarboxylase family. Type 1 subfamily. In terms of assembly, homodimer.

It catalyses the reaction orotidine 5'-phosphate + H(+) = UMP + CO2. It participates in pyrimidine metabolism; UMP biosynthesis via de novo pathway; UMP from orotate: step 2/2. Catalyzes the decarboxylation of orotidine 5'-monophosphate (OMP) to uridine 5'-monophosphate (UMP). This is Orotidine 5'-phosphate decarboxylase from Vibrio parahaemolyticus serotype O3:K6 (strain RIMD 2210633).